The primary structure comprises 720 residues: Protein-glutamine gamma-glutamyltransferase 5 (720 aa).

The residue at position 2 (Ala2) is an N-acetylalanine. Active-site residues include Cys278, His337, and Asp360. Residues Asn400, Asp402, Glu448, and Glu453 each contribute to the Ca(2+) site. The tract at residues 470-499 (HGSQRGAELQPSRPTSLSQDSPRSLHTPSL) is disordered. The segment covering 481–496 (SRPTSLSQDSPRSLHT) has biased composition (polar residues).

It belongs to the transglutaminase superfamily. Transglutaminase family. Requires Ca(2+) as cofactor. As to expression, expressed in foreskin keratinocytes.

Its subcellular location is the cytoplasm. The catalysed reaction is L-glutaminyl-[protein] + L-lysyl-[protein] = [protein]-L-lysyl-N(6)-5-L-glutamyl-[protein] + NH4(+). Functionally, catalyzes the cross-linking of proteins and the conjugation of polyamines to proteins. Contributes to the formation of the cornified cell envelope of keratinocytes. The polypeptide is Protein-glutamine gamma-glutamyltransferase 5 (TGM5) (Homo sapiens (Human)).